A 149-amino-acid polypeptide reads, in one-letter code: Ribonuclease H (149 aa).

One can recognise an RNase H type-1 domain in the interval 5–146; that stretch reads QRPHVVIFTD…ADELAREGLA (142 aa). Mg(2+) contacts are provided by Asp-14, Glu-52, Asp-74, and Asp-138.

It belongs to the RNase H family. As to quaternary structure, monomer. The cofactor is Mg(2+).

It is found in the cytoplasm. It carries out the reaction Endonucleolytic cleavage to 5'-phosphomonoester.. Its function is as follows. Endonuclease that specifically degrades the RNA of RNA-DNA hybrids. The chain is Ribonuclease H from Afipia carboxidovorans (strain ATCC 49405 / DSM 1227 / KCTC 32145 / OM5) (Oligotropha carboxidovorans).